Reading from the N-terminus, the 168-residue chain is MSSTKFLKPLCRIRAFHTSIARSFTIPFLPKIPQKPGGVSGTANDSSYMPPESRAQGSYHWIVERGLSLAVLPLIAVPLVTTGPISTFTDTFLSLVLLGHCHIGFQSCIIDYISERVYGKVHHYAMYLLSLGSFLSFVGIYKLESQEAGLIASLKSLWDNKPVEKKRQ.

A mitochondrion-targeting transit peptide spans 1-23 (MSSTKFLKPLCRIRAFHTSIARS). Residues 24-65 (FTIPFLPKIPQKPGGVSGTANDSSYMPPESRAQGSYHWIVER) are Mitochondrial matrix-facing. Residues 66 to 86 (GLSLAVLPLIAVPLVTTGPIS) traverse the membrane as a helical segment. At 87–92 (TFTDTF) the chain is on the mitochondrial intermembrane side. Residues 93–113 (LSLVLLGHCHIGFQSCIIDYI) form a helical membrane-spanning segment. Position 101 (C101) interacts with heme. Y112 is an a ubiquinone binding site. Topologically, residues 114–120 (SERVYGK) are mitochondrial matrix. Residues 121 to 141 (VHHYAMYLLSLGSFLSFVGIY) traverse the membrane as a helical segment. Residues 142 to 168 (KLESQEAGLIASLKSLWDNKPVEKKRQ) are Mitochondrial intermembrane-facing.

Belongs to the CybS family. Interacts with SDH3.

It localises to the mitochondrion inner membrane. Homolog of SDH4, but seems not to be a stoichiometric subunit of either the succinate dehydrogenase (SDH) complex or the mitochondrial inner membrane translocase TIM22 complex. The chain is Mitochondrial inner membrane protein SHH4 from Saccharomyces cerevisiae (strain ATCC 204508 / S288c) (Baker's yeast).